The primary structure comprises 82 residues: Apovitellenin-1 (82 aa).

Belongs to the apovitellenin family. In terms of assembly, monomer. In terms of tissue distribution, found in egg yolk and in plasma.

In terms of biological role, protein component of the very low density lipoprotein (VLDL) of egg-laying females. Potent lipoprotein lipase inhibitor, preventing the loss of triglycerides from VLDL on their way from the liver to the growing oocytes. This chain is Apovitellenin-1, found in Anas platyrhynchos (Mallard).